The following is a 121-amino-acid chain: Cell division protein FtsB (121 aa).

Residues 1–6 (MRNWRW) are Cytoplasmic-facing. A helical membrane pass occupies residues 7–24 (LLLVLAVLLAWLQYRFWF). Over 25 to 121 (GPGNSGEVMM…PASTDPVDHP (97 aa)) the chain is Periplasmic. A coiled-coil region spans residues 31-66 (EVMMLEAQVAHQTQDNEGLRQRNQALAAEVKDLKDG). Residues 94–121 (APLPAPASPETAAPAQQAPASTDPVDHP) are disordered. Low complexity predominate over residues 101-121 (SPETAAPAQQAPASTDPVDHP).

This sequence belongs to the FtsB family. In terms of assembly, part of a complex composed of FtsB, FtsL and FtsQ.

Its subcellular location is the cell inner membrane. Essential cell division protein. May link together the upstream cell division proteins, which are predominantly cytoplasmic, with the downstream cell division proteins, which are predominantly periplasmic. This chain is Cell division protein FtsB, found in Xanthomonas oryzae pv. oryzae (strain MAFF 311018).